A 352-amino-acid chain; its full sequence is Outer membrane protein assembly factor BamC (352 aa).

A signal peptide spans 1 to 19; that stretch reads MQYWIPKALAVSVLVSLSG. Residue C20 is the site of N-palmitoyl cysteine attachment. Residue C20 is the site of S-diacylglycerol cysteine attachment.

The protein belongs to the BamC family. As to quaternary structure, part of the Bam complex.

Its subcellular location is the cell outer membrane. In terms of biological role, part of the outer membrane protein assembly complex, which is involved in assembly and insertion of beta-barrel proteins into the outer membrane. The sequence is that of Outer membrane protein assembly factor BamC from Pseudoalteromonas sp. (strain SM9913).